We begin with the raw amino-acid sequence, 121 residues long: MAKTSSSSSSSNREWSSSLLLSPKVDCPSKTFSLLEAKSSTSFKPYGLISSPTSEVLVLFEPLRTILFYTPTLICFLFLQNFLYKSISEMSYDEMSFIIEFFFIAEAQFENFSSALQSPIF.

The chain crosses the membrane as a helical span at residues 65–84 (TILFYTPTLICFLFLQNFLY).

Its subcellular location is the membrane. This is an uncharacterized protein from Saccharomyces cerevisiae (strain ATCC 204508 / S288c) (Baker's yeast).